The following is a 79-amino-acid chain: UPF0154 protein SAG1601 (79 aa).

The helical transmembrane segment at 5 to 25 (IWILLIIVALFGGLVGGIFIA) threads the bilayer.

This sequence belongs to the UPF0154 family.

It is found in the membrane. The protein is UPF0154 protein SAG1601 of Streptococcus agalactiae serotype V (strain ATCC BAA-611 / 2603 V/R).